A 107-amino-acid chain; its full sequence is Large ribosomal subunit protein uL24 (107 aa).

Belongs to the universal ribosomal protein uL24 family. Part of the 50S ribosomal subunit.

In terms of biological role, one of two assembly initiator proteins, it binds directly to the 5'-end of the 23S rRNA, where it nucleates assembly of the 50S subunit. Functionally, one of the proteins that surrounds the polypeptide exit tunnel on the outside of the subunit. This Kosmotoga olearia (strain ATCC BAA-1733 / DSM 21960 / TBF 19.5.1) protein is Large ribosomal subunit protein uL24.